An 812-amino-acid chain; its full sequence is Probable inorganic carbon transporter subunit DabA (812 aa).

Residues C337, D339, H499, and C514 each contribute to the Zn(2+) site.

It belongs to the inorganic carbon transporter (TC 9.A.2) DabA family. In terms of assembly, forms a complex with DabB. Zn(2+) serves as cofactor.

It is found in the cell inner membrane. Part of an energy-coupled inorganic carbon pump. In Xanthomonas euvesicatoria pv. vesicatoria (strain 85-10) (Xanthomonas campestris pv. vesicatoria), this protein is Probable inorganic carbon transporter subunit DabA.